The chain runs to 485 residues: Aspartyl/glutamyl-tRNA(Asn/Gln) amidotransferase subunit B (485 aa).

Belongs to the GatB/GatE family. GatB subfamily. As to quaternary structure, heterotrimer of A, B and C subunits.

It catalyses the reaction L-glutamyl-tRNA(Gln) + L-glutamine + ATP + H2O = L-glutaminyl-tRNA(Gln) + L-glutamate + ADP + phosphate + H(+). The enzyme catalyses L-aspartyl-tRNA(Asn) + L-glutamine + ATP + H2O = L-asparaginyl-tRNA(Asn) + L-glutamate + ADP + phosphate + 2 H(+). Allows the formation of correctly charged Asn-tRNA(Asn) or Gln-tRNA(Gln) through the transamidation of misacylated Asp-tRNA(Asn) or Glu-tRNA(Gln) in organisms which lack either or both of asparaginyl-tRNA or glutaminyl-tRNA synthetases. The reaction takes place in the presence of glutamine and ATP through an activated phospho-Asp-tRNA(Asn) or phospho-Glu-tRNA(Gln). The chain is Aspartyl/glutamyl-tRNA(Asn/Gln) amidotransferase subunit B from Rhodospirillum rubrum (strain ATCC 11170 / ATH 1.1.1 / DSM 467 / LMG 4362 / NCIMB 8255 / S1).